The following is a 267-amino-acid chain: Hydroxyethylthiazole kinase (267 aa).

Methionine 49 contributes to the substrate binding site. 2 residues coordinate ATP: arginine 124 and threonine 170. Glycine 197 lines the substrate pocket.

It belongs to the Thz kinase family. The cofactor is Mg(2+).

The enzyme catalyses 5-(2-hydroxyethyl)-4-methylthiazole + ATP = 4-methyl-5-(2-phosphooxyethyl)-thiazole + ADP + H(+). The protein operates within cofactor biosynthesis; thiamine diphosphate biosynthesis; 4-methyl-5-(2-phosphoethyl)-thiazole from 5-(2-hydroxyethyl)-4-methylthiazole: step 1/1. Catalyzes the phosphorylation of the hydroxyl group of 4-methyl-5-beta-hydroxyethylthiazole (THZ). The chain is Hydroxyethylthiazole kinase from Tolumonas auensis (strain DSM 9187 / NBRC 110442 / TA 4).